Here is a 328-residue protein sequence, read N- to C-terminus: Phosphate acetyltransferase (328 aa).

Belongs to the phosphate acetyltransferase and butyryltransferase family.

It localises to the cytoplasm. The catalysed reaction is acetyl-CoA + phosphate = acetyl phosphate + CoA. It participates in metabolic intermediate biosynthesis; acetyl-CoA biosynthesis; acetyl-CoA from acetate: step 2/2. The chain is Phosphate acetyltransferase (pta) from Staphylococcus aureus (strain MRSA252).